The following is a 311-amino-acid chain: Oxygen-dependent coproporphyrinogen-III oxidase (311 aa).

Residue Ser93 coordinates substrate. 2 residues coordinate a divalent metal cation: His97 and His107. His107 (proton donor) is an active-site residue. Position 109–111 (109–111 (NVR)) interacts with substrate. A divalent metal cation contacts are provided by His153 and His184. Residues 252–287 (YVEFNLVFDRGTLFGLQSGGRTESILMSLPPVVKWR) form an important for dimerization region. 270 to 272 (GGR) provides a ligand contact to substrate.

The protein belongs to the aerobic coproporphyrinogen-III oxidase family. In terms of assembly, homodimer. The cofactor is a divalent metal cation.

It is found in the cytoplasm. The enzyme catalyses coproporphyrinogen III + O2 + 2 H(+) = protoporphyrinogen IX + 2 CO2 + 2 H2O. It participates in porphyrin-containing compound metabolism; protoporphyrin-IX biosynthesis; protoporphyrinogen-IX from coproporphyrinogen-III (O2 route): step 1/1. Involved in the heme biosynthesis. Catalyzes the aerobic oxidative decarboxylation of propionate groups of rings A and B of coproporphyrinogen-III to yield the vinyl groups in protoporphyrinogen-IX. In Aromatoleum aromaticum (strain DSM 19018 / LMG 30748 / EbN1) (Azoarcus sp. (strain EbN1)), this protein is Oxygen-dependent coproporphyrinogen-III oxidase.